The sequence spans 189 residues: Histidinol-phosphate aminotransferase (189 aa).

It belongs to the class-II pyridoxal-phosphate-dependent aminotransferase family. Histidinol-phosphate aminotransferase subfamily. In terms of assembly, homodimer. It depends on pyridoxal 5'-phosphate as a cofactor.

The enzyme catalyses L-histidinol phosphate + 2-oxoglutarate = 3-(imidazol-4-yl)-2-oxopropyl phosphate + L-glutamate. It participates in amino-acid biosynthesis; L-histidine biosynthesis; L-histidine from 5-phospho-alpha-D-ribose 1-diphosphate: step 7/9. This chain is Histidinol-phosphate aminotransferase (hisC), found in Thiocapsa roseopersicina.